Here is a 293-residue protein sequence, read N- to C-terminus: Elongation factor P--(R)-beta-lysine ligase homolog (293 aa).

Residues 86–88, 223–224, and G272 each bind ATP; these read RNN and EL.

It belongs to the class-II aminoacyl-tRNA synthetase family. EpmA subfamily. As to quaternary structure, homodimer.

This chain is Elongation factor P--(R)-beta-lysine ligase homolog (genX), found in Aquifex aeolicus (strain VF5).